Here is a 760-residue protein sequence, read N- to C-terminus: Xaa-Pro dipeptidyl-peptidase (760 aa).

Catalysis depends on charge relay system residues serine 349, aspartate 469, and histidine 499.

The protein belongs to the peptidase S15 family. As to quaternary structure, homodimer.

It is found in the cytoplasm. The catalysed reaction is Hydrolyzes Xaa-Pro-|- bonds to release unblocked, N-terminal dipeptides from substrates including Ala-Pro-|-p-nitroanilide and (sequentially) Tyr-Pro-|-Phe-Pro-|-Gly-Pro-|-Ile.. In terms of biological role, removes N-terminal dipeptides sequentially from polypeptides having unsubstituted N-termini provided that the penultimate residue is proline. The chain is Xaa-Pro dipeptidyl-peptidase from Streptococcus pyogenes serotype M5 (strain Manfredo).